We begin with the raw amino-acid sequence, 61 residues long: Large ribosomal subunit protein uL30 (61 aa).

It belongs to the universal ribosomal protein uL30 family. Part of the 50S ribosomal subunit.

This chain is Large ribosomal subunit protein uL30, found in Neisseria gonorrhoeae (strain ATCC 700825 / FA 1090).